The primary structure comprises 398 residues: NADH-ubiquinone oxidoreductase 49 kDa subunit (398 aa).

It belongs to the complex I 49 kDa subunit family.

The protein resides in the mitochondrion. The catalysed reaction is a ubiquinone + NADH + 5 H(+)(in) = a ubiquinol + NAD(+) + 4 H(+)(out). Core subunit of the mitochondrial membrane respiratory chain NADH dehydrogenase (Complex I) that is believed to belong to the minimal assembly required for catalysis. Complex I functions in the transfer of electrons from NADH to the respiratory chain. The immediate electron acceptor for the enzyme is believed to be ubiquinone. Component of the iron-sulfur (IP) fragment of the enzyme. Component of the iron-sulfur (IP) fragment of the enzyme. The sequence is that of NADH-ubiquinone oxidoreductase 49 kDa subunit (NAD7) from Cafeteria roenbergensis (Marine flagellate).